A 508-amino-acid chain; its full sequence is Carboxypeptidase Y homolog ARB_05721 (508 aa).

Positions 1 to 25 (MELYLNMLSFWYILLATSFFGPSQA) are cleaved as a signal peptide. Residues N132 and N169 are each glycosylated (N-linked (GlcNAc...) asparagine). Residue S204 is part of the active site. An N-linked (GlcNAc...) asparagine glycan is attached at N268. 3 disulfides stabilise this stretch: C282/C305, C289/C298, and C332/C338. D410 is a catalytic residue. C413 serves as a coordination point for substrate. N451 carries N-linked (GlcNAc...) asparagine glycosylation. The active site involves H484. M485 provides a ligand contact to substrate.

The protein belongs to the peptidase S10 family.

The protein localises to the secreted. It catalyses the reaction Release of a C-terminal amino acid with broad specificity.. Its function is as follows. Involved in degradation of small peptides. This chain is Carboxypeptidase Y homolog ARB_05721, found in Arthroderma benhamiae (strain ATCC MYA-4681 / CBS 112371) (Trichophyton mentagrophytes).